Reading from the N-terminus, the 217-residue chain is Small ribosomal subunit protein uS3c (217 aa).

Residues 43–117 enclose the KH type-2 domain; that stretch reads IKNYVQKNKR…KLNIAITRIA (75 aa).

This sequence belongs to the universal ribosomal protein uS3 family. As to quaternary structure, part of the 30S ribosomal subunit.

It localises to the plastid. The protein localises to the chloroplast. The chain is Small ribosomal subunit protein uS3c (rps3) from Platanus occidentalis (Sycamore).